Here is a 541-residue protein sequence, read N- to C-terminus: Chaperonin GroEL 2 (541 aa).

ATP-binding positions include 29–32 (TLGP), 86–90 (DGTTT), Gly413, 476–478 (NAA), and Asp492.

This sequence belongs to the chaperonin (HSP60) family. In terms of assembly, forms a cylinder of 14 subunits composed of two heptameric rings stacked back-to-back. Interacts with the co-chaperonin GroES.

It localises to the secreted. The protein localises to the capsule. Its subcellular location is the cell surface. The protein resides in the cell wall. It carries out the reaction ATP + H2O + a folded polypeptide = ADP + phosphate + an unfolded polypeptide.. In terms of biological role, together with its co-chaperonin GroES, plays an essential role in assisting protein folding. The GroEL-GroES system forms a nano-cage that allows encapsulation of the non-native substrate proteins and provides a physical environment optimized to promote and accelerate protein folding. In Mycobacterium leprae (strain TN), this protein is Chaperonin GroEL 2.